The following is a 574-amino-acid chain: Glycine--tRNA ligase (574 aa).

2 residues coordinate substrate: R96 and E162. ATP is bound by residues 194–196 (RNE), 204–209 (IRLREF), 327–328 (EC), and 450–453 (GIDR). Substrate is bound at residue 209-213 (FTQAE). Substrate is bound at residue 446–450 (EPSYG).

Belongs to the class-II aminoacyl-tRNA synthetase family.

The protein localises to the cytoplasm. It carries out the reaction tRNA(Gly) + glycine + ATP = glycyl-tRNA(Gly) + AMP + diphosphate. In terms of biological role, catalyzes the attachment of glycine to tRNA(Gly). The chain is Glycine--tRNA ligase from Methanococcus maripaludis (strain C6 / ATCC BAA-1332).